The chain runs to 523 residues: GMP synthase [glutamine-hydrolyzing] (523 aa).

Residues 8–205 (KILILDFGSQ…VVNICGCETK (198 aa)) form the Glutamine amidotransferase type-1 domain. Cys-85 acts as the Nucleophile in catalysis. Active-site residues include His-179 and Glu-181. One can recognise a GMPS ATP-PPase domain in the interval 206–398 (WTAENIIEDA…LGLPAEMINR (193 aa)). An ATP-binding site is contributed by 233-239 (SGGVDSS).

As to quaternary structure, homodimer.

It catalyses the reaction XMP + L-glutamine + ATP + H2O = GMP + L-glutamate + AMP + diphosphate + 2 H(+). It participates in purine metabolism; GMP biosynthesis; GMP from XMP (L-Gln route): step 1/1. In terms of biological role, catalyzes the synthesis of GMP from XMP. This chain is GMP synthase [glutamine-hydrolyzing] (guaA), found in Haemophilus influenzae (strain ATCC 51907 / DSM 11121 / KW20 / Rd).